Consider the following 428-residue polypeptide: Gamma-glutamyl phosphate reductase (428 aa).

It belongs to the gamma-glutamyl phosphate reductase family.

It localises to the cytoplasm. The catalysed reaction is L-glutamate 5-semialdehyde + phosphate + NADP(+) = L-glutamyl 5-phosphate + NADPH + H(+). Its pathway is amino-acid biosynthesis; L-proline biosynthesis; L-glutamate 5-semialdehyde from L-glutamate: step 2/2. Functionally, catalyzes the NADPH-dependent reduction of L-glutamate 5-phosphate into L-glutamate 5-semialdehyde and phosphate. The product spontaneously undergoes cyclization to form 1-pyrroline-5-carboxylate. In Picosynechococcus sp. (strain ATCC 27264 / PCC 7002 / PR-6) (Agmenellum quadruplicatum), this protein is Gamma-glutamyl phosphate reductase.